A 258-amino-acid chain; its full sequence is Type III pantothenate kinase (258 aa).

6–13 (DVGNTNTV) contacts ATP. Residues Tyr-100 and 107 to 110 (GADR) each bind substrate. Residue Asp-109 is the Proton acceptor of the active site. Asp-129 lines the K(+) pocket. Thr-132 contributes to the ATP binding site. Thr-184 lines the substrate pocket.

This sequence belongs to the type III pantothenate kinase family. Homodimer. NH4(+) is required as a cofactor. Requires K(+) as cofactor.

It localises to the cytoplasm. The enzyme catalyses (R)-pantothenate + ATP = (R)-4'-phosphopantothenate + ADP + H(+). It functions in the pathway cofactor biosynthesis; coenzyme A biosynthesis; CoA from (R)-pantothenate: step 1/5. Catalyzes the phosphorylation of pantothenate (Pan), the first step in CoA biosynthesis. The chain is Type III pantothenate kinase from Geobacillus sp. (strain WCH70).